The chain runs to 248 residues: Carboxy-S-adenosyl-L-methionine synthase (248 aa).

Residues Tyr-40, 65 to 67 (GCS), 95 to 96 (DN), 123 to 124 (DI), Asn-138, and Arg-205 each bind S-adenosyl-L-methionine.

Belongs to the class I-like SAM-binding methyltransferase superfamily. Cx-SAM synthase family. In terms of assembly, homodimer.

The enzyme catalyses prephenate + S-adenosyl-L-methionine = carboxy-S-adenosyl-L-methionine + 3-phenylpyruvate + H2O. Functionally, catalyzes the conversion of S-adenosyl-L-methionine (SAM) to carboxy-S-adenosyl-L-methionine (Cx-SAM). The chain is Carboxy-S-adenosyl-L-methionine synthase from Hahella chejuensis (strain KCTC 2396).